A 285-amino-acid chain; its full sequence is uncharacterized protein (285 aa).

The tract at residues 1-25 is disordered; sequence MANQKKKTLPPQHQNQQPGFEYLMD. 45–69 lines the NADP(+) pocket; sequence IITGGDSGIGRAVSVLFAKEGANVV. A substrate-binding site is contributed by serine 177. Tyrosine 190 acts as the Proton acceptor in catalysis.

This sequence belongs to the short-chain dehydrogenases/reductases (SDR) family.

This is an uncharacterized protein from Bacillus subtilis (strain 168).